Here is a 354-residue protein sequence, read N- to C-terminus: 5,10-methenyltetrahydromethanopterin hydrogenase (354 aa).

It belongs to the HMD family.

The enzyme catalyses 5,10-methenyl-5,6,7,8-tetrahydromethanopterin + H2 = 5,10-methylenetetrahydromethanopterin + H(+). It participates in one-carbon metabolism; methanogenesis from CO(2); 5,10-methylene-5,6,7,8-tetrahydromethanopterin from 5,10-methenyl-5,6,7,8-tetrahydromethanopterin (hydrogen route): step 1/1. In terms of biological role, catalyzes the reversible reduction of methenyl-H(4)MPT(+) to methylene-H(4)MPT. In Methanococcus maripaludis (strain C7 / ATCC BAA-1331), this protein is 5,10-methenyltetrahydromethanopterin hydrogenase.